Reading from the N-terminus, the 309-residue chain is Malate dehydrogenase (309 aa).

NAD(+) contacts are provided by residues 10–15 (GAGNVG) and D34. Positions 83 and 89 each coordinate substrate. NAD(+)-binding positions include N96 and 119–121 (VTN). Residues N121 and R152 each coordinate substrate. H176 serves as the catalytic Proton acceptor.

The protein belongs to the LDH/MDH superfamily. MDH type 3 family.

It carries out the reaction (S)-malate + NAD(+) = oxaloacetate + NADH + H(+). Its function is as follows. Catalyzes the reversible oxidation of malate to oxaloacetate. The chain is Malate dehydrogenase from Desulforudis audaxviator (strain MP104C).